Consider the following 127-residue polypeptide: Calcitonin gene-related peptide 2 (127 aa).

An N-terminal signal peptide occupies residues 1–25 (MGFRKFSPFLALSILVLYQAGSLQA). A propeptide spanning residues 26–79 (APFRSALESSPDPATLSKEDARLLLAALVQDYVQMKASELKQEQETQGSSSAAQ) is cleaved from the precursor. A disulfide bond links C83 and C88. F118 is subject to Phenylalanine amide. A propeptide spanning residues 124–127 (DLQA) is cleaved from the precursor.

Belongs to the calcitonin family. In terms of tissue distribution, expressed in spinal cord, pituitary and thalamus.

The protein resides in the secreted. Functionally, CALCB/CGRP2 is a peptide hormone that induces vasodilation mediated by the CALCRL-RAMP1 receptor complex. Dilates a variety of vessels including the coronary, cerebral and systemic vasculature. Its abundance in the CNS also points toward a neurotransmitter or neuromodulator role. This Homo sapiens (Human) protein is Calcitonin gene-related peptide 2.